The following is a 195-amino-acid chain: Large ribosomal subunit protein bL32m (195 aa).

4 residues coordinate Zn(2+): Cys95, Cys98, Cys108, and Cys111.

This sequence belongs to the bacterial ribosomal protein bL32 family. Component of the mitochondrial large ribosomal subunit (mt-LSU).

Its subcellular location is the mitochondrion. Its function is as follows. Component of the mitochondrial large ribosomal subunit (mt-LSU). The mitochondrial ribosome (mitoribosome) is a large ribonucleoprotein complex responsible for the synthesis of proteins inside mitochondria. The sequence is that of Large ribosomal subunit protein bL32m (mRpL32) from Drosophila melanogaster (Fruit fly).